The primary structure comprises 444 residues: Enolase 2 (444 aa).

Residues histidine 165 and glutamate 174 each contribute to the substrate site. Glutamate 217 acts as the Proton donor in catalysis. Aspartate 252, glutamate 303, and aspartate 330 together coordinate Mg(2+). Substrate is bound by residues glutamate 303 and aspartate 330. Residue lysine 355 is the Proton acceptor of the active site. Substrate contacts are provided by residues 382-385 (SHRS) and lysine 406.

The protein belongs to the enolase family. Homodimer. Requires Mg(2+) as cofactor.

The protein resides in the cytoplasm. It catalyses the reaction (2R)-2-phosphoglycerate = phosphoenolpyruvate + H2O. The protein operates within carbohydrate degradation; glycolysis; pyruvate from D-glyceraldehyde 3-phosphate: step 4/5. This is Enolase 2 (ENO2) from Toxoplasma gondii.